A 297-amino-acid chain; its full sequence is Glutamyl-Q tRNA(Asp) synthetase (297 aa).

L-glutamate-binding positions include 7 to 11 and glutamate 43; that span reads RFAPS. Positions 10–20 match the 'HIGH' region motif; the sequence is PSPTGPLHFGS. The Zn(2+) site is built by cysteine 99, cysteine 101, tyrosine 122, and cysteine 126. L-glutamate-binding residues include tyrosine 182 and arginine 200. A 'KMSKS' region motif is present at residues 238-242; that stretch reads KLSKQ. Lysine 241 is an ATP binding site.

Belongs to the class-I aminoacyl-tRNA synthetase family. GluQ subfamily. The cofactor is Zn(2+).

Functionally, catalyzes the tRNA-independent activation of glutamate in presence of ATP and the subsequent transfer of glutamate onto a tRNA(Asp). Glutamate is transferred on the 2-amino-5-(4,5-dihydroxy-2-cyclopenten-1-yl) moiety of the queuosine in the wobble position of the QUC anticodon. This Burkholderia pseudomallei (strain K96243) protein is Glutamyl-Q tRNA(Asp) synthetase.